The chain runs to 371 residues: Riboflavin biosynthesis protein RibD (371 aa).

The CMP/dCMP-type deaminase domain occupies 1 to 122 (MEEYYMNTAI…MLEEAGIEVK (122 aa)). The deaminase stretch occupies residues 1-144 (MEEYYMNTAI…KMFLHFMRTG (144 aa)). Residue histidine 49 participates in Zn(2+) binding. The active-site Proton donor is glutamate 51. Zn(2+) contacts are provided by cysteine 74 and cysteine 83. Residues 145–371 (LPYVTLKAAA…KDGDDVYRNR (227 aa)) are reductase. Residue alanine 153 participates in NADP(+) binding. Serine 167 serves as a coordination point for substrate. Residue tryptophan 169 coordinates NADP(+). Arginine 183 contributes to the substrate binding site. Positions 195 and 199 each coordinate NADP(+). 2 residues coordinate substrate: leucine 203 and arginine 206. Threonine 221 lines the NADP(+) pocket. Glutamate 290 serves as a coordination point for substrate. 292-298 (GASVHGS) is an NADP(+) binding site.

This sequence in the N-terminal section; belongs to the cytidine and deoxycytidylate deaminase family. The protein in the C-terminal section; belongs to the HTP reductase family. Zn(2+) serves as cofactor.

The enzyme catalyses 2,5-diamino-6-hydroxy-4-(5-phosphoribosylamino)-pyrimidine + H2O + H(+) = 5-amino-6-(5-phospho-D-ribosylamino)uracil + NH4(+). It carries out the reaction 5-amino-6-(5-phospho-D-ribitylamino)uracil + NADP(+) = 5-amino-6-(5-phospho-D-ribosylamino)uracil + NADPH + H(+). It functions in the pathway cofactor biosynthesis; riboflavin biosynthesis; 5-amino-6-(D-ribitylamino)uracil from GTP: step 2/4. It participates in cofactor biosynthesis; riboflavin biosynthesis; 5-amino-6-(D-ribitylamino)uracil from GTP: step 3/4. In terms of biological role, converts 2,5-diamino-6-(ribosylamino)-4(3h)-pyrimidinone 5'-phosphate into 5-amino-6-(ribosylamino)-2,4(1h,3h)-pyrimidinedione 5'-phosphate. In Bacillus amyloliquefaciens (Bacillus velezensis), this protein is Riboflavin biosynthesis protein RibD (ribD).